Reading from the N-terminus, the 144-residue chain is MAFNKEEKIKSLNRMQYEVTQNNGTEPPFQNEFWDHKEEGLYVDIVSGKPLFTSLDKFDSHCGWPSFTKPIEEEEVDEKLDTSHGMIRTEVRSKTADSHLGHVFNDGPGPSGLRYCINSAALRFIPKDKLKEEGYEACLHLFEK.

Residues K5–K127 enclose the MsrB domain. C116 acts as the Nucleophile in catalysis.

This sequence belongs to the MsrB Met sulfoxide reductase family.

The enzyme catalyses L-methionyl-[protein] + [thioredoxin]-disulfide + H2O = L-methionyl-(R)-S-oxide-[protein] + [thioredoxin]-dithiol. This Bacillus velezensis (strain DSM 23117 / BGSC 10A6 / LMG 26770 / FZB42) (Bacillus amyloliquefaciens subsp. plantarum) protein is Peptide methionine sulfoxide reductase MsrB.